Reading from the N-terminus, the 271-residue chain is Insulin-like growth factor-binding protein 5 (271 aa).

A signal peptide spans 1–19; sequence MVISVVLLLLAACAVPAQG. An IGFBP N-terminal domain is found at 22–102; sequence SFVHCEPCDE…LHGRGVCLNE (81 aa). Cystine bridges form between C26/C52, C29/C54, C37/C55, C44/C58, C66/C79, and C73/C99. A compositionally biased stretch (basic and acidic residues) spans 109–121; that stretch reads TKIERDSREHEEP. The interval 109-129 is disordered; it reads TKIERDSREHEEPTTSEMAEE. S115 bears the Phosphoserine mark. The region spanning 188–262 is the Thyroglobulin type-1 domain; that stretch reads QGPCRRHMEA…MEYVDGDFQC (75 aa). 3 disulfides stabilise this stretch: C191–C218, C229–C240, and C242–C262.

In terms of assembly, interacts with IGF1; this interaction enhances the growth stimulatory effects of IGF1 on fibroblasts. Interacts with CAV1; this interaction allows trafficking of IGFBP5 from the plasma membrane to the nucleus. Interacts with NCL; this interaction is necessary for IGFBP5 localization to the nucleus. In terms of tissue distribution, mostly in kidney.

Its subcellular location is the secreted. It localises to the cytoplasm. The protein localises to the nucleus. Multifunctional protein that plays a critical role in regulating the availability of IGFs to their receptors and thereby regulates IGF-mediated cellular processes including proliferation, differentiation, and apoptosis in a cell-type specific manner. Increases the cell proliferation of osteoblasts, intestinal smooth muscle cells and neuroblastoma cells. Enhances adhesion and survival of epithelial cells but decreases adhesion of mesenchymal cells. Once secreted, acts as a major mediator of mTORC1-dependent feedback inhibition of IGF1 signaling. Also plays a role in the induction of extracellular matrix (ECM) production and deposition independently of its nuclear translocation and binding to IGFs. Acts itself as a growth factor that can act independently of IGFs to regulate bone formation. Acts as a ligand for the ROR1 receptor which triggers formation of ROR1/HER2 heterodimer to enhance CREB oncogenic signaling. This is Insulin-like growth factor-binding protein 5 (Igfbp5) from Rattus norvegicus (Rat).